The chain runs to 246 residues: Phosphonates import ATP-binding protein PhnC (246 aa).

The ABC transporter domain occupies I2 to G246. G35 to S42 contributes to the ATP binding site.

It belongs to the ABC transporter superfamily. Phosphonates importer (TC 3.A.1.9.1) family. As to quaternary structure, the complex is composed of two ATP-binding proteins (PhnC), two transmembrane proteins (PhnE) and a solute-binding protein (PhnD).

The protein resides in the cell membrane. It carries out the reaction phosphonate(out) + ATP + H2O = phosphonate(in) + ADP + phosphate + H(+). In terms of biological role, part of the ABC transporter complex PhnCDE involved in phosphonates import. Responsible for energy coupling to the transport system. This chain is Phosphonates import ATP-binding protein PhnC, found in Lactococcus lactis subsp. cremoris (strain SK11).